Consider the following 346-residue polypeptide: Nucleoplasmin-like protein ANO39 (346 aa).

Serine 2 carries the post-translational modification N-acetylserine. Residue asparagine 85 is glycosylated (N-linked (GlcNAc...) asparagine). Over residues 123–141 the composition is skewed to acidic residues; the sequence is DEEELEEDDEEEEEEDEVE. Residues 123 to 285 form a disordered region; it reads DEEELEEDDE…KAKAKTDTKL (163 aa). A Phosphoserine; by CDC2 modification is found at serine 145. Over residues 171–180 the composition is skewed to basic and acidic residues; that stretch reads AKLDKDADKK. Residues 181 to 247 are compositionally biased toward acidic residues; that stretch reads EDDDEEEDDE…EEEEDEDEES (67 aa). The N-linked (GlcNAc...) asparagine glycan is linked to asparagine 264. Residues 271 to 285 show a composition bias toward basic and acidic residues; it reads GDNKPKAKAKTDTKL.

Belongs to the nucleoplasmin family. Phosphorylation occurs in oocytes during the progression of the first meiotic M phase. No phosphorylation is observed in immature oocytes. As to expression, expressed specifically in the oocytes of the ovaries.

The protein resides in the nucleus. Its subcellular location is the nucleolus. It is found in the cytoplasm. Functionally, binds double-stranded RNA and both single-stranded and double-stranded DNA. This is Nucleoplasmin-like protein ANO39 from Patiria pectinifera (Starfish).